The sequence spans 634 residues: uncharacterized protein (634 aa).

An N-terminal signal peptide occupies residues 1 to 40 (MWLQQRLKGLPGLLSSSWARRLLCLLGLLLLLLWFGGSGA). Over 41 to 589 (RRAAGGLHLL…DEHMAQQDPG (549 aa)) the chain is Extracellular. An N-linked (GlcNAc...) asparagine glycan is attached at asparagine 363. Residues 590 to 610 (LPFLFWFSVASLITLFHLFLF) form a helical membrane-spanning segment. At 611–634 (KLIYNEYCGPGAKPLFRSKEDPSV) the chain is on the cytoplasmic side.

It localises to the membrane. This is an uncharacterized protein from Homo sapiens (Human).